The chain runs to 297 residues: Nucleotide-binding protein BTH_I0482 (297 aa).

8–15 is an ATP binding site; it reads GISGSGKS. 57 to 60 contacts GTP; that stretch reads DARS.

The protein belongs to the RapZ-like family.

Functionally, displays ATPase and GTPase activities. This Burkholderia thailandensis (strain ATCC 700388 / DSM 13276 / CCUG 48851 / CIP 106301 / E264) protein is Nucleotide-binding protein BTH_I0482.